Consider the following 81-residue polypeptide: Small ribosomal subunit protein eS21 (81 aa).

Belongs to the eukaryotic ribosomal protein eS21 family.

This Zea mays (Maize) protein is Small ribosomal subunit protein eS21 (RPS21).